Consider the following 376-residue polypeptide: Lateral eye opsin (376 aa).

Residues 1–46 are Extracellular-facing; it reads MANQLSYSSLGWPYQPNASVVDTMPKEMLYMIHEHWYAFPPMNPLW. N-linked (GlcNAc...) asparagine glycosylation is present at Asn17. The chain crosses the membrane as a helical span at residues 47-71; the sequence is YSILGVAMIILGIICVLGNGMVIYL. The Cytoplasmic portion of the chain corresponds to 72–83; the sequence is MMTTKSLRTPTN. Residues 84–108 traverse the membrane as a helical segment; the sequence is LLVVNLAFSDFCMMAFMMPTMTSNC. Residues 109-123 lie on the Extracellular side of the membrane; the sequence is FAETWILGPFMCEVY. A disulfide bridge links Cys120 with Cys197. A helical transmembrane segment spans residues 124–143; that stretch reads GMAGSLFGCASIWSMVMITL. At 144–162 the chain is on the cytoplasmic side; that stretch reads DRYNVIVRGMAAAPLTHKK. Residues 163 to 186 traverse the membrane as a helical segment; sequence ATLLLLFVWIWSGGWTILPFFGWS. Residues 187–210 lie on the Extracellular side of the membrane; it reads RYVPEGNLTSCTVDYLTKDWSSAS. A glycan (N-linked (GlcNAc...) asparagine) is linked at Asn193. A helical membrane pass occupies residues 211–238; sequence YVVIYGLAVYFLPLITMIYCYFFIVHAV. At 239 to 274 the chain is on the cytoplasmic side; sequence AEHEKQLREQAKKMNVASLRANADQQKQSAECRLAK. Residues 275–298 form a helical membrane-spanning segment; the sequence is VAMMTVGLWFMAWTPYLIISWAGV. Residues 299 to 306 lie on the Extracellular side of the membrane; that stretch reads FSSGTRLT. The helical transmembrane segment at 307-331 threads the bilayer; that stretch reads PLATIWGSVFAKANSCYNPIVYGIS. Lys318 carries the post-translational modification N6-(retinylidene)lysine. The Cytoplasmic segment spans residues 332 to 376; that stretch reads HPRYKAALYQRFPSLACGSGESGSDVKSEASATTTMEEKPKIPEA. Residues 349–376 form a disordered region; the sequence is GSGESGSDVKSEASATTTMEEKPKIPEA. A compositionally biased stretch (basic and acidic residues) spans 367 to 376; that stretch reads MEEKPKIPEA.

The protein belongs to the G-protein coupled receptor 1 family. Opsin subfamily. Phosphorylated on some or all of the serine and threonine residues present in the C-terminal region. Lateral eye.

Its subcellular location is the membrane. Its function is as follows. Visual pigments are the light-absorbing molecules that mediate vision. They consist of an apoprotein, opsin, covalently linked to cis-retinal. The chain is Lateral eye opsin from Limulus polyphemus (Atlantic horseshoe crab).